A 432-amino-acid chain; its full sequence is Serine hydroxymethyltransferase (432 aa).

(6S)-5,6,7,8-tetrahydrofolate is bound by residues leucine 127 and 131–133 (GHL). At lysine 236 the chain carries N6-(pyridoxal phosphate)lysine.

The protein belongs to the SHMT family. As to quaternary structure, homodimer. Pyridoxal 5'-phosphate is required as a cofactor.

It localises to the cytoplasm. The enzyme catalyses (6R)-5,10-methylene-5,6,7,8-tetrahydrofolate + glycine + H2O = (6S)-5,6,7,8-tetrahydrofolate + L-serine. The protein operates within one-carbon metabolism; tetrahydrofolate interconversion. It participates in amino-acid biosynthesis; glycine biosynthesis; glycine from L-serine: step 1/1. Catalyzes the reversible interconversion of serine and glycine with tetrahydrofolate (THF) serving as the one-carbon carrier. This reaction serves as the major source of one-carbon groups required for the biosynthesis of purines, thymidylate, methionine, and other important biomolecules. Also exhibits THF-independent aldolase activity toward beta-hydroxyamino acids, producing glycine and aldehydes, via a retro-aldol mechanism. The protein is Serine hydroxymethyltransferase of Rhizobium johnstonii (strain DSM 114642 / LMG 32736 / 3841) (Rhizobium leguminosarum bv. viciae).